The sequence spans 175 residues: FOXL2 neighbor protein (175 aa).

Disordered stretches follow at residues 1–39 (MTRTPVGSARTRPKPRKLGPQRGKALQASSRLSESPALV) and 70–100 (AQKTGPGILQQRQKPPAPRASGGPALLGKRR).

The sequence is that of FOXL2 neighbor protein (FOXL2NB) from Homo sapiens (Human).